The following is a 343-amino-acid chain: Ubiquitin carboxyl-terminal hydrolase isozyme L5 (343 aa).

In terms of domain architecture, UCH catalytic spans 6–218; sequence GWCTIESDPG…IRFNLMAVIK (213 aa). Cys-83 (nucleophile) is an active-site residue. Residue His-157 is the Proton donor of the active site. Positions 242 to 266 are disordered; sequence LSELNSGSGGDNKEESGGATPTTKE. Positions 306-334 constitute a ULD domain; that stretch reads NFTPLILNLIKGLAEKDNLQPLIQKAKDQ.

The protein belongs to the peptidase C12 family. As to quaternary structure, component of the 19S (PA700) regulatory complex of the 26S proteasome.

It localises to the cytoplasm. It is found in the nucleus. The catalysed reaction is Thiol-dependent hydrolysis of ester, thioester, amide, peptide and isopeptide bonds formed by the C-terminal Gly of ubiquitin (a 76-residue protein attached to proteins as an intracellular targeting signal).. In terms of biological role, protease that specifically cleaves 'Lys-48'-linked polyubiquitin chains. Deubiquitinating enzyme associated with the 19S regulatory subunit of the 26S proteasome. The chain is Ubiquitin carboxyl-terminal hydrolase isozyme L5 (uch2) from Dictyostelium discoideum (Social amoeba).